Here is a 79-residue protein sequence, read N- to C-terminus: Acyl carrier protein (79 aa).

One can recognise a Carrier domain in the interval 2–77 (STIEERVKKI…QAIDYVKSHV (76 aa)). O-(pantetheine 4'-phosphoryl)serine is present on S37.

This sequence belongs to the acyl carrier protein (ACP) family. In terms of processing, 4'-phosphopantetheine is transferred from CoA to a specific serine of apo-ACP by AcpS. This modification is essential for activity because fatty acids are bound in thioester linkage to the sulfhydryl of the prosthetic group.

It is found in the cytoplasm. It participates in lipid metabolism; fatty acid biosynthesis. In terms of biological role, carrier of the growing fatty acid chain in fatty acid biosynthesis. This is Acyl carrier protein from Xanthomonas oryzae pv. oryzae (strain MAFF 311018).